A 120-amino-acid chain; its full sequence is MFLLYEYDIFWAFLIISSVIPILAFXISGILAPISKGPEKLSSYESGIEPMGDAWLQFRIRYYMFALVFVVFDVETVFLYPWAMSFDVLGVSVFIEALIFVLILIVGLVYAWRKGALEWS.

Helical transmembrane passes span 9 to 29, 64 to 84, and 88 to 108; these read IFWAFLIISSVIPILAFXISG, MFALVFVVFDVETVFLYPWAM, and VLGVSVFIEALIFVLILIVGL.

It belongs to the complex I subunit 3 family. As to quaternary structure, NDH is composed of at least 16 different subunits, 5 of which are encoded in the nucleus.

The protein resides in the plastid. The protein localises to the chloroplast thylakoid membrane. It carries out the reaction a plastoquinone + NADH + (n+1) H(+)(in) = a plastoquinol + NAD(+) + n H(+)(out). It catalyses the reaction a plastoquinone + NADPH + (n+1) H(+)(in) = a plastoquinol + NADP(+) + n H(+)(out). Its function is as follows. NDH shuttles electrons from NAD(P)H:plastoquinone, via FMN and iron-sulfur (Fe-S) centers, to quinones in the photosynthetic chain and possibly in a chloroplast respiratory chain. The immediate electron acceptor for the enzyme in this species is believed to be plastoquinone. Couples the redox reaction to proton translocation, and thus conserves the redox energy in a proton gradient. This is NAD(P)H-quinone oxidoreductase subunit 3, chloroplastic from Eucalyptus globulus subsp. globulus (Tasmanian blue gum).